Reading from the N-terminus, the 195-residue chain is Pyridoxal 5'-phosphate synthase subunit PdxT (195 aa).

Gly46–Ser48 contributes to the L-glutamine binding site. Cys78 (nucleophile) is an active-site residue. Residues Arg107 and Ile135–Arg136 each bind L-glutamine. Active-site charge relay system residues include His172 and Glu174.

Belongs to the glutaminase PdxT/SNO family. In the presence of PdxS, forms a dodecamer of heterodimers. Only shows activity in the heterodimer.

It carries out the reaction aldehydo-D-ribose 5-phosphate + D-glyceraldehyde 3-phosphate + L-glutamine = pyridoxal 5'-phosphate + L-glutamate + phosphate + 3 H2O + H(+). The enzyme catalyses L-glutamine + H2O = L-glutamate + NH4(+). It participates in cofactor biosynthesis; pyridoxal 5'-phosphate biosynthesis. Catalyzes the hydrolysis of glutamine to glutamate and ammonia as part of the biosynthesis of pyridoxal 5'-phosphate. The resulting ammonia molecule is channeled to the active site of PdxS. The polypeptide is Pyridoxal 5'-phosphate synthase subunit PdxT (Corynebacterium jeikeium (strain K411)).